Consider the following 217-residue polypeptide: Uridylate kinase (217 aa).

6 to 10 (KISGR) provides a ligand contact to ATP. Gly-38 provides a ligand contact to UMP. ATP contacts are provided by Gly-39 and Arg-43. UMP is bound by residues Asp-60 and 107-113 (FQPGQST). ATP-binding residues include Asn-134, Tyr-139, and Asp-142.

This sequence belongs to the UMP kinase family. In terms of assembly, homohexamer.

It is found in the cytoplasm. The catalysed reaction is UMP + ATP = UDP + ADP. It participates in pyrimidine metabolism; CTP biosynthesis via de novo pathway; UDP from UMP (UMPK route): step 1/1. Inhibited by UTP. Catalyzes the reversible phosphorylation of UMP to UDP. This is Uridylate kinase from Pyrobaculum arsenaticum (strain DSM 13514 / JCM 11321 / PZ6).